The sequence spans 316 residues: 4-hydroxy-3-methylbut-2-enyl diphosphate reductase (316 aa).

C12 contributes to the [4Fe-4S] cluster binding site. H41 and H74 together coordinate (2E)-4-hydroxy-3-methylbut-2-enyl diphosphate. Dimethylallyl diphosphate contacts are provided by H41 and H74. Residues H41 and H74 each coordinate isopentenyl diphosphate. C96 serves as a coordination point for [4Fe-4S] cluster. H124 contacts (2E)-4-hydroxy-3-methylbut-2-enyl diphosphate. H124 is a binding site for dimethylallyl diphosphate. Position 124 (H124) interacts with isopentenyl diphosphate. The active-site Proton donor is E126. Residue T169 participates in (2E)-4-hydroxy-3-methylbut-2-enyl diphosphate binding. Position 199 (C199) interacts with [4Fe-4S] cluster. S227, S228, N229, and S271 together coordinate (2E)-4-hydroxy-3-methylbut-2-enyl diphosphate. S227, S228, N229, and S271 together coordinate dimethylallyl diphosphate. Residues S227, S228, N229, and S271 each contribute to the isopentenyl diphosphate site.

Belongs to the IspH family. Requires [4Fe-4S] cluster as cofactor.

It catalyses the reaction isopentenyl diphosphate + 2 oxidized [2Fe-2S]-[ferredoxin] + H2O = (2E)-4-hydroxy-3-methylbut-2-enyl diphosphate + 2 reduced [2Fe-2S]-[ferredoxin] + 2 H(+). It carries out the reaction dimethylallyl diphosphate + 2 oxidized [2Fe-2S]-[ferredoxin] + H2O = (2E)-4-hydroxy-3-methylbut-2-enyl diphosphate + 2 reduced [2Fe-2S]-[ferredoxin] + 2 H(+). It participates in isoprenoid biosynthesis; dimethylallyl diphosphate biosynthesis; dimethylallyl diphosphate from (2E)-4-hydroxy-3-methylbutenyl diphosphate: step 1/1. It functions in the pathway isoprenoid biosynthesis; isopentenyl diphosphate biosynthesis via DXP pathway; isopentenyl diphosphate from 1-deoxy-D-xylulose 5-phosphate: step 6/6. Catalyzes the conversion of 1-hydroxy-2-methyl-2-(E)-butenyl 4-diphosphate (HMBPP) into a mixture of isopentenyl diphosphate (IPP) and dimethylallyl diphosphate (DMAPP). Acts in the terminal step of the DOXP/MEP pathway for isoprenoid precursor biosynthesis. This is 4-hydroxy-3-methylbut-2-enyl diphosphate reductase from Xanthomonas campestris pv. campestris (strain ATCC 33913 / DSM 3586 / NCPPB 528 / LMG 568 / P 25).